The sequence spans 243 residues: MSPATPVPPDSILESPFEEMALVRGGWLWRQSSILRRWKRNWFALWLDGTLGYYHDETAQDEEDRVVIHFNVRDIKVGQECQDVQPPEGRSRDGLLTVNLREGSRLHLCAETRDDAIAWKTALMEANSTPAPAGATVPPRSRRVCPKVRCTTLSWNPCKVERRIWVRVYSPYQDYYEVVPPNAHEATYVRSYYGPPYAGPGVTHVIVREDPCYSSGAPLAMGMLAGAATGAALGSLMWSPCWF.

Residues 21–128 (ALVRGGWLWR…WKTALMEANS (108 aa)) form the PH domain.

Binds transducins. Homodimer. Interacts (via PH domain) with MYO1C. Interacts (via PH domain) with MYO7A. As to expression, highly expressed in retina and brain. In retina, abundantly expressed in photoreceptors. Isoform 4 is the predominant isoform expressed in mature olfactory receptor neurons and vestibular and cochlear hair cells. Also expressed in cells with possible sensory function, including peripheral retinal ganglion cells, cochlear interdental cells, and neurons of the circumventricular organ (at protein level).

The protein localises to the membrane. Its subcellular location is the cytoplasm. The polypeptide is Pleckstrin homology domain-containing family B member 1 (Plekhb1) (Mus musculus (Mouse)).